The primary structure comprises 210 residues: Pyridoxine/pyridoxamine 5'-phosphate oxidase (210 aa).

Substrate contacts are provided by residues 7–10 and lysine 65; that span reads RDEY. FMN is bound by residues 60 to 65, 75 to 76, arginine 81, lysine 82, and glutamine 104; these read RMVLLK and FT. Residues tyrosine 122, arginine 126, and serine 130 each coordinate substrate. Residues 139 to 140 and tryptophan 183 each bind FMN; that span reads QS. 189–191 is a substrate binding site; sequence RLH. Arginine 193 lines the FMN pocket.

Belongs to the pyridoxamine 5'-phosphate oxidase family. Homodimer. It depends on FMN as a cofactor.

It carries out the reaction pyridoxamine 5'-phosphate + O2 + H2O = pyridoxal 5'-phosphate + H2O2 + NH4(+). It catalyses the reaction pyridoxine 5'-phosphate + O2 = pyridoxal 5'-phosphate + H2O2. It functions in the pathway cofactor metabolism; pyridoxal 5'-phosphate salvage; pyridoxal 5'-phosphate from pyridoxamine 5'-phosphate: step 1/1. It participates in cofactor metabolism; pyridoxal 5'-phosphate salvage; pyridoxal 5'-phosphate from pyridoxine 5'-phosphate: step 1/1. In terms of biological role, catalyzes the oxidation of either pyridoxine 5'-phosphate (PNP) or pyridoxamine 5'-phosphate (PMP) into pyridoxal 5'-phosphate (PLP). This chain is Pyridoxine/pyridoxamine 5'-phosphate oxidase, found in Haemophilus influenzae (strain ATCC 51907 / DSM 11121 / KW20 / Rd).